The chain runs to 374 residues: Flap endonuclease 1 (374 aa).

Residues 1–105 are N-domain; sequence MGIKGLTALI…ELLQKRFGRR (105 aa). D34 provides a ligand contact to Mg(2+). Residues R47 and R71 each coordinate DNA. D87 serves as a coordination point for Mg(2+). Positions 103-122 are disordered; the sequence is GRREEAREQEEEQKDVADAE. Residues 123-254 form an I-domain region; sequence KMDQLARRQV…KTALKLIREH (132 aa). Residues E159, E161, D180, and D182 each contribute to the Mg(2+) site. Residue E159 coordinates DNA. 2 residues coordinate DNA: G232 and D234. Residue D234 coordinates Mg(2+). The tract at residues 335-374 is disordered; the sequence is SLSQKQQGRLDGFFTVKPGSAPPKRKAEDDKKNVKKKGKK. The tract at residues 340–348 is interaction with PCNA; the sequence is QQGRLDGFF.

The protein belongs to the XPG/RAD2 endonuclease family. FEN1 subfamily. Interacts with PCNA. Three molecules of FEN1 bind to one PCNA trimer with each molecule binding to one PCNA monomer. PCNA stimulates the nuclease activity without altering cleavage specificity. It depends on Mg(2+) as a cofactor. Phosphorylated. Phosphorylation upon DNA damage induces relocalization to the nuclear plasma.

It localises to the nucleus. It is found in the nucleolus. The protein localises to the nucleoplasm. Its subcellular location is the mitochondrion. Its function is as follows. Structure-specific nuclease with 5'-flap endonuclease and 5'-3' exonuclease activities involved in DNA replication and repair. During DNA replication, cleaves the 5'-overhanging flap structure that is generated by displacement synthesis when DNA polymerase encounters the 5'-end of a downstream Okazaki fragment. It enters the flap from the 5'-end and then tracks to cleave the flap base, leaving a nick for ligation. Also involved in the long patch base excision repair (LP-BER) pathway, by cleaving within the apurinic/apyrimidinic (AP) site-terminated flap. Acts as a genome stabilization factor that prevents flaps from equilibrating into structures that lead to duplications and deletions. Also possesses 5'-3' exonuclease activity on nicked or gapped double-stranded DNA, and exhibits RNase H activity. Also involved in replication and repair of rDNA and in repairing mitochondrial DNA. The sequence is that of Flap endonuclease 1 from Mycosarcoma maydis (Corn smut fungus).